A 102-amino-acid chain; its full sequence is Putative lipid-transfer protein DIR1 (102 aa).

Positions 1–25 (MASKKAAMVMMAMIVIMAMLVDTSV) are cleaved as a signal peptide. Disulfide bonds link cysteine 30–cysteine 67, cysteine 40–cysteine 56, cysteine 57–cysteine 94, and cysteine 69–cysteine 102. Glutamine 34 contacts a 1-acyl-sn-glycero-3-phosphocholine. Glutamate 36 lines the Zn(2+) pocket. Asparagine 38 serves as a coordination point for a 1-acyl-sn-glycero-3-phosphocholine. Histidine 62 provides a ligand contact to Zn(2+).

The protein belongs to the A9/FIL1 family. As to quaternary structure, self-interacts and binds to AZI1. Does not interact with PDLP1. The cofactor is Zn(2+).

It localises to the secreted. Its subcellular location is the extracellular space. The protein resides in the apoplast. The protein localises to the endoplasmic reticulum. It is found in the cell junction. It localises to the plasmodesma. In terms of biological role, putative lipid transfer protein required for systemic acquired resistance (SAR) long distance signaling. May interact with a lipid-derived molecule to promote long distance signaling associated with SAR. Together with AZI1, required for glycerol-3-phosphate- (G3P) and azelaic acid- (AA) induced systemic acquired resistance (SAR). Component of plant systemic immunity involved in priming defenses in a AA-dependent manner, by modulating production and/or translocation of a mobile signal(s) during SAR. Is able to bind with high affinity monoacylated phospholipids, mainly lysophosphatidylcholines. The polypeptide is Putative lipid-transfer protein DIR1 (DIR1) (Arabidopsis thaliana (Mouse-ear cress)).